The chain runs to 582 residues: Semenogelin-2 (582 aa).

The first 23 residues, 1 to 23 (MKSIILFVLSLLLILEKQAAVMG), serve as a signal peptide directing secretion. 3 disordered regions span residues 25–62 (KGGS…SKGS), 91–190 (HKTT…QGGS), and 272–553 (NLNQ…FSGA). The span at 50 to 59 (GQKDKQHTES) shows a compositional bias: basic and acidic residues. A compositionally biased stretch (basic residues) spans 92–134 (KTTKSKQHLRRHQRLLNYKQKGRGRVKPKRHFHLIVIHRKGGQ). Composition is skewed to polar residues over residues 137–161 (HGTQ…QYSN) and 174–190 (EQAS…QGGS). Residues 293 to 305 (TEERQPNHEEKSV) are compositionally biased toward basic and acidic residues. Residues 325 to 335 (KSQNQVTIPSQ) are compositionally biased toward polar residues. The segment covering 336–345 (DQEHGHKENK) has biased composition (basic and acidic residues). The segment covering 385-395 (KSQNQVAIPSQ) has biased composition (polar residues). Positions 396–405 (DQEHGHKENK) are enriched in basic and acidic residues. The span at 445–455 (KSQNQVTIPSQ) shows a compositional bias: polar residues. A compositionally biased stretch (basic and acidic residues) spans 456-465 (DQEHGHKENK). Composition is skewed to polar residues over residues 487–498 (KDVSQSSLSFQT) and 506–529 (SQIQ…NSGK). Basic and acidic residues predominate over residues 530–546 (SADRKQDLLSHEQEGRY).

Belongs to the semenogelin family. In terms of assembly, interacts with SERPINA5.

It localises to the secreted. Functionally, participates in the formation of a gel matrix (sperm coagulum) entrapping the accessory gland secretions and ejaculated spermatozoa. The sequence is that of Semenogelin-2 (SEMG2) from Macaca fascicularis (Crab-eating macaque).